The following is a 348-amino-acid chain: Lipoyl synthase (348 aa).

Cysteine 55, cysteine 60, cysteine 66, cysteine 81, cysteine 85, cysteine 88, and serine 292 together coordinate [4Fe-4S] cluster. Positions 67-281 (WESREATFLI…ADAAKEMGFA (215 aa)) constitute a Radical SAM core domain.

The protein belongs to the radical SAM superfamily. Lipoyl synthase family. [4Fe-4S] cluster serves as cofactor.

It is found in the cytoplasm. The catalysed reaction is [[Fe-S] cluster scaffold protein carrying a second [4Fe-4S](2+) cluster] + N(6)-octanoyl-L-lysyl-[protein] + 2 oxidized [2Fe-2S]-[ferredoxin] + 2 S-adenosyl-L-methionine + 4 H(+) = [[Fe-S] cluster scaffold protein] + N(6)-[(R)-dihydrolipoyl]-L-lysyl-[protein] + 4 Fe(3+) + 2 hydrogen sulfide + 2 5'-deoxyadenosine + 2 L-methionine + 2 reduced [2Fe-2S]-[ferredoxin]. Its pathway is protein modification; protein lipoylation via endogenous pathway; protein N(6)-(lipoyl)lysine from octanoyl-[acyl-carrier-protein]: step 2/2. Functionally, catalyzes the radical-mediated insertion of two sulfur atoms into the C-6 and C-8 positions of the octanoyl moiety bound to the lipoyl domains of lipoate-dependent enzymes, thereby converting the octanoylated domains into lipoylated derivatives. This is Lipoyl synthase from Corynebacterium glutamicum (strain R).